Consider the following 69-residue polypeptide: Pleurain-A4 (69 aa).

Positions 1–22 are cleaved as a signal peptide; it reads MFTLKKTLLLLFFLGTISISLC. Positions 23 to 43 are excised as a propeptide; that stretch reads KQERDADEDDGRKMTEEEVKR. A disulfide bridge connects residues Cys63 and Cys69.

It belongs to the frog skin active peptide (FSAP) family. Pleurain subfamily. Expressed by the skin glands.

Its subcellular location is the secreted. Its function is as follows. Antimicrobial peptide. Has activity against Gram-positive and -negative bacteria, and fungi. Has little hemolytic activity on red blood cells. The chain is Pleurain-A4 from Nidirana pleuraden (Yunnan pond frog).